An 80-amino-acid polypeptide reads, in one-letter code: Acyl carrier protein (80 aa).

Residues Asp-4 to Gln-79 enclose the Carrier domain. O-(pantetheine 4'-phosphoryl)serine is present on Ser-39.

It belongs to the acyl carrier protein (ACP) family. In terms of processing, 4'-phosphopantetheine is transferred from CoA to a specific serine of apo-ACP by AcpS. This modification is essential for activity because fatty acids are bound in thioester linkage to the sulfhydryl of the prosthetic group.

Its subcellular location is the cytoplasm. The protein operates within lipid metabolism; fatty acid biosynthesis. Functionally, carrier of the growing fatty acid chain in fatty acid biosynthesis. This Prochlorococcus marinus (strain MIT 9211) protein is Acyl carrier protein.